A 633-amino-acid polypeptide reads, in one-letter code: uncharacterized protein (633 aa).

This is an uncharacterized protein from Archaeoglobus fulgidus (strain ATCC 49558 / DSM 4304 / JCM 9628 / NBRC 100126 / VC-16).